A 545-amino-acid polypeptide reads, in one-letter code: Cytochrome P450 10 (545 aa).

Cys493 is a heme binding site.

It belongs to the cytochrome P450 family. It depends on heme as a cofactor. As to expression, abundantly expressed in the female gonadotropic hormone producing dorsal bodies.

Its function is as follows. May be involved in the synthesis of the female gonadotropic hormone produced by the dorsal bodies. The polypeptide is Cytochrome P450 10 (CYP10) (Lymnaea stagnalis (Great pond snail)).